The chain runs to 124 residues: Small ribosomal subunit protein uS12 (124 aa).

Aspartate 89 carries the 3-methylthioaspartic acid modification.

Belongs to the universal ribosomal protein uS12 family. In terms of assembly, part of the 30S ribosomal subunit. Contacts proteins S8 and S17. May interact with IF1 in the 30S initiation complex.

Its function is as follows. With S4 and S5 plays an important role in translational accuracy. In terms of biological role, interacts with and stabilizes bases of the 16S rRNA that are involved in tRNA selection in the A site and with the mRNA backbone. Located at the interface of the 30S and 50S subunits, it traverses the body of the 30S subunit contacting proteins on the other side and probably holding the rRNA structure together. The combined cluster of proteins S8, S12 and S17 appears to hold together the shoulder and platform of the 30S subunit. This chain is Small ribosomal subunit protein uS12, found in Buchnera aphidicola subsp. Acyrthosiphon pisum (strain 5A).